The sequence spans 362 residues: 3-dehydroquinate synthase (362 aa).

NAD(+)-binding positions include 71–76, 105–109, 129–130, K142, K151, and 169–172; these read DGERYK, GVIGD, TT, and CLKT. Zn(2+)-binding residues include E184, H247, and H264.

This sequence belongs to the sugar phosphate cyclases superfamily. Dehydroquinate synthase family. Co(2+) is required as a cofactor. The cofactor is Zn(2+). It depends on NAD(+) as a cofactor.

The protein resides in the cytoplasm. It catalyses the reaction 7-phospho-2-dehydro-3-deoxy-D-arabino-heptonate = 3-dehydroquinate + phosphate. It participates in metabolic intermediate biosynthesis; chorismate biosynthesis; chorismate from D-erythrose 4-phosphate and phosphoenolpyruvate: step 2/7. Catalyzes the conversion of 3-deoxy-D-arabino-heptulosonate 7-phosphate (DAHP) to dehydroquinate (DHQ). The polypeptide is 3-dehydroquinate synthase (Salmonella arizonae (strain ATCC BAA-731 / CDC346-86 / RSK2980)).